The chain runs to 287 residues: MPPLWALLALGCLRFGSAVNLQPQLASVTFATNNPTLTTVALEKPLCMFDSKEALTGTHEVYLYVLVDSAISRNASVQDSTNTPLGSTFLQTEGGRTGPYKAVAFDLIPCSDLPSLDAIGDVSKASQILNAYLVRVGANGTCLWDPNFQGLCNAPLSAATEYRFKYVLVNMSTGLVEDQTLWSDPIRTNQLTPYSTIDTWPGRRSGGMIVITSILGSLPFFLLVGFAGAIALSLVDMGSSDGETTHDSQITQEAVPKSLGASESSYTSVNRGPPLDRAEVYSSKLQD.

A signal peptide spans 1-18; it reads MPPLWALLALGCLRFGSA. Topologically, residues 19–207 are lumenal; the sequence is VNLQPQLASV…DTWPGRRSGG (189 aa). N-linked (GlcNAc...) asparagine glycans are attached at residues asparagine 74, asparagine 139, and asparagine 170. Residues 208-235 form a helical membrane-spanning segment; sequence MIVITSILGSLPFFLLVGFAGAIALSLV. The Cytoplasmic segment spans residues 236–287; it reads DMGSSDGETTHDSQITQEAVPKSLGASESSYTSVNRGPPLDRAEVYSSKLQD. Residues 242–287 are disordered; that stretch reads GETTHDSQITQEAVPKSLGASESSYTSVNRGPPLDRAEVYSSKLQD. Residues 261–270 are compositionally biased toward polar residues; that stretch reads ASESSYTSVN.

It belongs to the uroplakin-3 family. As to quaternary structure, heterodimer with uroplakin-1B (UPK1B). As to expression, expressed in ureter.

It is found in the endoplasmic reticulum membrane. In terms of biological role, component of the asymmetric unit membrane (AUM); a highly specialized biomembrane elaborated by terminally differentiated urothelial cells. May play an important role in AUM-cytoskeleton interaction in terminally differentiated urothelial cells. It also contributes to the formation of urothelial glycocalyx which may play an important role in preventing bacterial adherence. The protein is Uroplakin-3a (UPK3A) of Homo sapiens (Human).